The following is a 151-amino-acid chain: RNA polymerase-binding transcription factor DksA (151 aa).

Residues 34-54 (EAQLSHFKRILEAWRNQLRDE) are a coiled coil. Zn(2+) contacts are provided by cysteine 114, cysteine 117, cysteine 135, and cysteine 138. The dksA C4-type zinc finger occupies 114 to 138 (CESCGVEIGIRRLEARPTADLCIDC).

The protein belongs to the DksA family. As to quaternary structure, interacts directly with the RNA polymerase.

The protein resides in the cytoplasm. Its function is as follows. Transcription factor that acts by binding directly to the RNA polymerase (RNAP). Required for negative regulation of rRNA expression and positive regulation of several amino acid biosynthesis promoters. Also required for regulation of fis expression. In Salmonella typhi, this protein is RNA polymerase-binding transcription factor DksA.